A 171-amino-acid chain; its full sequence is Large ribosomal subunit protein bL9 (171 aa).

This sequence belongs to the bacterial ribosomal protein bL9 family.

In terms of biological role, binds to the 23S rRNA. This Rickettsia africae (strain ESF-5) protein is Large ribosomal subunit protein bL9.